Consider the following 161-residue polypeptide: Nucleotide-binding protein AZOSEA28950 (161 aa).

This sequence belongs to the YajQ family.

In terms of biological role, nucleotide-binding protein. The chain is Nucleotide-binding protein AZOSEA28950 from Aromatoleum aromaticum (strain DSM 19018 / LMG 30748 / EbN1) (Azoarcus sp. (strain EbN1)).